The sequence spans 424 residues: 5-methylthioadenosine/S-adenosylhomocysteine deaminase (424 aa).

H60 and H62 together coordinate Zn(2+). Substrate-binding residues include E89 and H181. Residue H208 coordinates Zn(2+). Residues E211 and D296 each coordinate substrate. D296 lines the Zn(2+) pocket.

This sequence belongs to the metallo-dependent hydrolases superfamily. MTA/SAH deaminase family. Requires Zn(2+) as cofactor.

The enzyme catalyses S-adenosyl-L-homocysteine + H2O + H(+) = S-inosyl-L-homocysteine + NH4(+). It carries out the reaction S-methyl-5'-thioadenosine + H2O + H(+) = S-methyl-5'-thioinosine + NH4(+). Catalyzes the deamination of 5-methylthioadenosine and S-adenosyl-L-homocysteine into 5-methylthioinosine and S-inosyl-L-homocysteine, respectively. Is also able to deaminate adenosine. The protein is 5-methylthioadenosine/S-adenosylhomocysteine deaminase of Thermococcus kodakarensis (strain ATCC BAA-918 / JCM 12380 / KOD1) (Pyrococcus kodakaraensis (strain KOD1)).